The primary structure comprises 308 residues: Nuclear transcription factor Y subunit A-5 (308 aa).

Basic and acidic residues predominate over residues 1–10 (MQVFQRKEDS). Disordered regions lie at residues 1–26 (MQVF…IQGS) and 49–71 (GLQL…GGGE). The span at 11–26 (SWGNSMPTTNSNIQGS) shows a compositional bias: polar residues. Positions 181–204 (FVNAKQYHAILRRRKHRAKLEAQN) match the Subunit association domain (SAD) motif. Residues 211 to 236 (KPYLHESRHLHALKRARGSGGRFLNT) constitute a DNA-binding region (NFYA/HAP2-type). The tract at residues 251 to 273 (MANGQNFSMSPHGGGSGIGSSSI) is disordered.

It belongs to the NFYA/HAP2 subunit family. As to quaternary structure, heterotrimeric transcription factor composed of three components, NF-YA, NF-YB and NF-YC. NF-YB and NF-YC must interact and dimerize for NF-YA association and DNA binding. In terms of tissue distribution, expressed in the whole plant, except roots. Present in etiolated seedlings.

The protein localises to the nucleus. Its function is as follows. Stimulates the transcription of various genes by recognizing and binding to a CCAAT motif in promoters. Involved in the blue light (BL) and abscisic acid (ABA) signaling pathways. The chain is Nuclear transcription factor Y subunit A-5 (NFYA5) from Arabidopsis thaliana (Mouse-ear cress).